Consider the following 338-residue polypeptide: Formamidase (338 aa).

Residues 15 to 257 (VVIGLAQLAL…DEIVCCELRP (243 aa)) form the CN hydrolase domain. Residue E61 is the Proton acceptor of the active site. The Proton donor role is filled by K130. C163 (nucleophile) is an active-site residue.

The protein belongs to the carbon-nitrogen hydrolase superfamily. Aliphatic amidase family.

It carries out the reaction formamide + H2O = formate + NH4(+). Functionally, is an aliphatic amidase with a restricted substrate specificity, as it only hydrolyzes formamide. This chain is Formamidase, found in Pseudomonas syringae pv. syringae (strain B728a).